Consider the following 371-residue polypeptide: Dual-specificity RNA methyltransferase RlmN (371 aa).

Glu86 (proton acceptor) is an active-site residue. In terms of domain architecture, Radical SAM core spans 105–338 (RHARYTICVS…CTIRQSKGLD (234 aa)). A disulfide bridge connects residues Cys112 and Cys343. Residues Cys119, Cys123, and Cys126 each contribute to the [4Fe-4S] cluster site. S-adenosyl-L-methionine-binding positions include 169–170 (GE), Ser201, 224–226 (SLH), and Asn300. The S-methylcysteine intermediate role is filled by Cys343. Polar residues predominate over residues 348-363 (QRSQNLSPSNNNTSKP). Positions 348–371 (QRSQNLSPSNNNTSKPSDIKKSES) are disordered.

It belongs to the radical SAM superfamily. RlmN family. Requires [4Fe-4S] cluster as cofactor.

The protein resides in the cytoplasm. It carries out the reaction adenosine(2503) in 23S rRNA + 2 reduced [2Fe-2S]-[ferredoxin] + 2 S-adenosyl-L-methionine = 2-methyladenosine(2503) in 23S rRNA + 5'-deoxyadenosine + L-methionine + 2 oxidized [2Fe-2S]-[ferredoxin] + S-adenosyl-L-homocysteine. It catalyses the reaction adenosine(37) in tRNA + 2 reduced [2Fe-2S]-[ferredoxin] + 2 S-adenosyl-L-methionine = 2-methyladenosine(37) in tRNA + 5'-deoxyadenosine + L-methionine + 2 oxidized [2Fe-2S]-[ferredoxin] + S-adenosyl-L-homocysteine. Its function is as follows. Specifically methylates position 2 of adenine 2503 in 23S rRNA and position 2 of adenine 37 in tRNAs. m2A2503 modification seems to play a crucial role in the proofreading step occurring at the peptidyl transferase center and thus would serve to optimize ribosomal fidelity. The polypeptide is Dual-specificity RNA methyltransferase RlmN (Campylobacter curvus (strain 525.92)).